Here is a 309-residue protein sequence, read N- to C-terminus: Porphobilinogen deaminase (309 aa).

C240 is subject to S-(dipyrrolylmethanemethyl)cysteine.

The protein belongs to the HMBS family. In terms of assembly, monomer. Dipyrromethane is required as a cofactor.

It catalyses the reaction 4 porphobilinogen + H2O = hydroxymethylbilane + 4 NH4(+). It participates in porphyrin-containing compound metabolism; protoporphyrin-IX biosynthesis; coproporphyrinogen-III from 5-aminolevulinate: step 2/4. In terms of biological role, tetrapolymerization of the monopyrrole PBG into the hydroxymethylbilane pre-uroporphyrinogen in several discrete steps. The polypeptide is Porphobilinogen deaminase (Brevibacillus brevis (strain 47 / JCM 6285 / NBRC 100599)).